We begin with the raw amino-acid sequence, 357 residues long: sn-glycerol-3-phosphate import ATP-binding protein UgpC (357 aa).

Positions 4 to 235 (LKLQAVTKSY…PASLFVASFI (232 aa)) constitute an ABC transporter domain. 37–44 (GPSGCGKS) serves as a coordination point for ATP.

This sequence belongs to the ABC transporter superfamily. sn-glycerol-3-phosphate importer (TC 3.A.1.1.3) family. As to quaternary structure, the complex is composed of two ATP-binding proteins (UgpC), two transmembrane proteins (UgpA and UgpE) and a solute-binding protein (UgpB).

It is found in the cell inner membrane. It catalyses the reaction sn-glycerol 3-phosphate(out) + ATP + H2O = sn-glycerol 3-phosphate(in) + ADP + phosphate + H(+). Its function is as follows. Part of the ABC transporter complex UgpBAEC involved in sn-glycerol-3-phosphate (G3P) import. Responsible for energy coupling to the transport system. The polypeptide is sn-glycerol-3-phosphate import ATP-binding protein UgpC (Yersinia pestis bv. Antiqua (strain Antiqua)).